Here is a 399-residue protein sequence, read N- to C-terminus: MLLEGVKVVELSSFIAAPCCAKMLGDWGAEVIKIEPIEGDGIRVMGGTFKSPASDDENPMFELENGNKKGVSINVKSKEGVEILHKLLSEADIFVTNVRVQALEKMGIAYDQIKDKYPGLIFSQILGYGEKGPLKDKPGFDYTAYFARGGVSQSVMEKGTSPANTAAGFGDHYAGLALAAGSLAALHKKAQTGKGERVTVSLFHTAIYGMGTMITTAQYGNEMPLSRENPNSPLMTTYKCKDGRWIQLALIQYNKWLGKFCKVINREYILEDDRYNNIDSMVNHVEDLVKIVGEAMLEKTLDEWSALLEEADLPFEKIQSCEDLLDDEQAWANDFLFKKTYDSGNTGVLVNTPVMFRNEGIKEYTPAPKVGQHTVEVLKSLGYDEEKINNFKDSKVVRY.

Residue Asp-171 is the Nucleophile of the active site.

It belongs to the CoA-transferase III family. Homodimer.

The catalysed reaction is 4-methylpentanoyl-CoA + (2R)-hydroxy-4-methylpentanoate = (R)-2-hydroxy-4-methylpentanoyl-CoA + 4-methylpentanoate. The protein operates within amino-acid degradation; L-leucine degradation. Its function is as follows. Involved in the reductive branch of L-leucine fermentation. Catalyzes the transfer of the CoA moiety from 4-methylpentanoyl-CoA (isocaproyl-CoA) to (R)-2-hydroxy-4-methylpentanoate ((R)-2-hydroxyisocaproate), leading to the formation of (R)-2-hydroxy-4-methylpentanoyl-CoA. Other CoA thioesters, such as acetyl-CoA or butyryl-CoA, are not accepted as substrates. In Clostridioides difficile (Peptoclostridium difficile), this protein is (R)-2-hydroxy-4-methylpentanoate CoA-transferase.